Here is a 218-residue protein sequence, read N- to C-terminus: Ribosomal RNA small subunit methyltransferase J (218 aa).

S-adenosyl-L-methionine-binding positions include 55-56, 71-72, and Asp-123; these read RD and ER.

It belongs to the methyltransferase superfamily. RsmJ family.

The protein localises to the cytoplasm. It catalyses the reaction guanosine(1516) in 16S rRNA + S-adenosyl-L-methionine = N(2)-methylguanosine(1516) in 16S rRNA + S-adenosyl-L-homocysteine + H(+). Functionally, specifically methylates the guanosine in position 1516 of 16S rRNA. The polypeptide is Ribosomal RNA small subunit methyltransferase J (Rhodopseudomonas palustris (strain HaA2)).